Consider the following 273-residue polypeptide: Putative expansin-B2 (273 aa).

An N-terminal signal peptide occupies residues 1-29 (MTILVVDRYYMLMNLLFALTCLLLNLTHC). The N-linked (GlcNAc...) asparagine glycan is linked to N36. The Expansin-like EG45 domain occupies 65–173 (GGACGYGNAV…KKVECNYIGK (109 aa)). 3 disulfide bridges follow: C68–C97, C100–C168, and C105–C111. Residues 186–269 (NSFAVLVAYV…NWQPGAIYKS (84 aa)) form the Expansin-like CBD domain.

This sequence belongs to the expansin family. Expansin B subfamily.

It is found in the secreted. It localises to the cell wall. Its subcellular location is the membrane. Functionally, may cause loosening and extension of plant cell walls by disrupting non-covalent bonding between cellulose microfibrils and matrix glucans. No enzymatic activity has been found. This Arabidopsis thaliana (Mouse-ear cress) protein is Putative expansin-B2 (EXPB2).